A 423-amino-acid chain; its full sequence is Zinc-type alcohol dehydrogenase-like protein C1198.01 (423 aa).

The interval 14 to 36 (KQLGHREVSEGSTQPKPDPSGAT) is disordered. C74, H97, C127, C130, C133, and C141 together coordinate Zn(2+).

Belongs to the zinc-containing alcohol dehydrogenase family. Class-III subfamily. It depends on Zn(2+) as a cofactor.

It is found in the golgi apparatus. This is Zinc-type alcohol dehydrogenase-like protein C1198.01 from Schizosaccharomyces pombe (strain 972 / ATCC 24843) (Fission yeast).